Consider the following 204-residue polypeptide: Large ribosomal subunit protein eL15y (204 aa).

The disordered stretch occupies residues 162–204 (RGLTSEGKKNRGLRGKGHNNHKNRPSRRATWKKNNSISLRRYR). Basic residues predominate over residues 171-192 (NRGLRGKGHNNHKNRPSRRATW). Residues 193 to 204 (KKNNSISLRRYR) are compositionally biased toward polar residues.

The protein belongs to the eukaryotic ribosomal protein eL15 family.

In Arabidopsis thaliana (Mouse-ear cress), this protein is Large ribosomal subunit protein eL15y (RPL15B).